A 156-amino-acid chain; its full sequence is ATP synthase subunit b (156 aa).

Residues 7–29 form a helical membrane-spanning segment; the sequence is LFAQMVVFLVLAWFTMKFVWPPL.

Belongs to the ATPase B chain family. As to quaternary structure, F-type ATPases have 2 components, F(1) - the catalytic core - and F(0) - the membrane proton channel. F(1) has five subunits: alpha(3), beta(3), gamma(1), delta(1), epsilon(1). F(0) has three main subunits: a(1), b(2) and c(10-14). The alpha and beta chains form an alternating ring which encloses part of the gamma chain. F(1) is attached to F(0) by a central stalk formed by the gamma and epsilon chains, while a peripheral stalk is formed by the delta and b chains.

It localises to the cell inner membrane. Functionally, f(1)F(0) ATP synthase produces ATP from ADP in the presence of a proton or sodium gradient. F-type ATPases consist of two structural domains, F(1) containing the extramembraneous catalytic core and F(0) containing the membrane proton channel, linked together by a central stalk and a peripheral stalk. During catalysis, ATP synthesis in the catalytic domain of F(1) is coupled via a rotary mechanism of the central stalk subunits to proton translocation. Component of the F(0) channel, it forms part of the peripheral stalk, linking F(1) to F(0). The sequence is that of ATP synthase subunit b from Burkholderia vietnamiensis (strain G4 / LMG 22486) (Burkholderia cepacia (strain R1808)).